The following is a 27-amino-acid chain: Secretin (27 aa).

At V27 the chain carries Valine amide.

It belongs to the glucagon family.

Its subcellular location is the secreted. In terms of biological role, hormone involved in different processes, such as regulation of the pH of the duodenal content, food intake and water homeostasis. Exerts its biological effects by binding to secretin receptor (SCTR), a G-protein coupled receptor expressed in the basolateral domain of several cells. Acts as a key gastrointestinal hormone by regulating the pH of the duodenal content. Secreted by S cells of the duodenum in the crypts of Lieberkuehn and regulates the pH of the duodenum by (1) inhibiting the secretion of gastric acid from the parietal cells of the stomach and (2) stimulating the production of bicarbonate (NaHCO(3)) from the ductal cells of the pancreas. Production of bicarbonate is essential to neutralize the pH and ensure no damage is done to the small intestine by the gastric acid. In addition to regulating the pH of the duodenal content, plays a central role in diet induced thermogenesis: acts as a non-sympathetic brown fat (BAT) activator mediating prandial thermogenesis, which consequentially induces satiation. Mechanistically, secretin released by the gut after a meal binds to secretin receptor (SCTR) in brown adipocytes, activating brown fat thermogenesis by stimulating lipolysis, which is sensed in the brain and promotes satiation. Also able to stimulate lipolysis in white adipocytes. Also plays an important role in cellular osmoregulation: released into the systemic circulation in response to hyperosmolality and acts at different levels in the hypothalamus, pituitary and kidney to regulate water homeostasis. Also plays a role in the central nervous system, possibly by acting as a neuropeptide hormone: required for hippocampal synaptic function and neural progenitor cells maintenance. This Canis lupus familiaris (Dog) protein is Secretin.